The chain runs to 219 residues: Transmembrane emp24 domain-containing protein 10 (219 aa).

A signal peptide spans 1-31 (MSGLSGPPARRGPFPLALLLLFLLGPRLVLA). The tract at residues 1 to 142 (MSGLSGPPAR…KNYEEIAKVE (142 aa)) is required for interaction with STX17. The Lumenal portion of the chain corresponds to 32–185 (ISFHLPINSR…RDTNESTNTR (154 aa)). One can recognise a GOLD domain in the interval 41 to 193 (RKCLREEIHK…TRVLYFSIFS (153 aa)). A required for TMED10 and TMED2 cis-Golgi network localization region spans residues 147–178 (LEVELRRLEDLSESIVNDFAYMKKREEEMRDT). Dimethylated arginine occurs at positions 171 and 176. Asparagine 179 carries N-linked (GlcNAc...) asparagine glycosylation. The helical transmembrane segment at 186–206 (VLYFSIFSMFCLIGLATWQVF) threads the bilayer. The tract at residues 204 to 219 (QVFYLRRFFKAKKLIE) is interaction with COPG1. Residues 207–219 (YLRRFFKAKKLIE) lie on the Cytoplasmic side of the membrane. The segment at 207–219 (YLRRFFKAKKLIE) is interaction with ARF1 and IL1B. A COPII vesicle coat-binding motif is present at residues 211–212 (FF). The COPI vesicle coat-binding motif lies at 211–219 (FFKAKKLIE).

The protein belongs to the EMP24/GP25L family. Predominantly dimeric and to a lesser extent monomeric in the ER. Monomer and dimer in ERGIC and cis-Golgi network. Forms homooligomer (via GOLD domain); the assembly is promoted by direct binding with leaderless cargos and may form a protein channel that facilitates cargo entry into the ERGIC. Forms heterooligomeric complexes with other members of the p24 family such as TMED2, TMED7 and TMED9. Interacts (via GOLD domain) with TMED2 (via GOLD domain); the complex is required for export of TMED10 from the ER to the cis-Golgi network; the complex is proposed to be involved in cis-Golgi network dynamics and / or biogenesis. Associates with the COPI vesicle coat subunits (coatomer). Tetramerization of the cytoplasmic domain at the Golgi membrane in vitro; the complex is proposed to interact with COPI coatomer and induce budding of the vesicles. Interacts with COPG1; the interaction involves TMED10 homodimer. Interacts with ARF1 (GDP-bound); the interaction probably involves a TMED10 oligomer. Interacts with SEC23A, SEC24B, SEC24C and SEC24D components of the coat protein complex II/COPII, indicative of an association of TMED10 with the COPII vesicle coat. Interacts with CD59. Interacts with MPPE1/PGAP5; the complex might recruit and sort GPI-anchored proteins to the ER-exit site, or the interaction might lead to recycling of PGAP5 between the ER and the Golgi. Interacts with F2LR1/PAR2. Interacts with KDELR2/ERD2; the interaction is disrupted by KDELR2 ligand. Found in a complex composed at least of SURF4, TMED2 and TMED10. Associates with the presenilin-dependent gamma-secretase complex. Interacts with STX17; the interaction is direct. Interacts with IL-1; the interaction is direct. Interacts with RAB21 (active GTP-bound form); the interaction is indirect and regulates TMED10 abundance and localization at the Golgi.

It is found in the endoplasmic reticulum membrane. It localises to the endoplasmic reticulum-Golgi intermediate compartment membrane. The protein localises to the golgi apparatus membrane. The protein resides in the golgi apparatus. Its subcellular location is the cis-Golgi network membrane. It is found in the trans-Golgi network membrane. It localises to the cytoplasmic vesicle. The protein localises to the secretory vesicle membrane. The protein resides in the cell membrane. Its subcellular location is the melanosome. Functionally, cargo receptor involved in protein vesicular trafficking and quality control in the endoplasmic reticulum (ER) and Golgi. The p24 protein family is a group of transmembrane proteins that bind coat protein complex I/COPI and coat protein complex II/COPII involved in vesicular trafficking between the membranes. Acts at the lumenal side for incorporation of secretory cargo molecules into transport vesicles and involved in vesicle coat formation at the cytoplasmic side. Mainly functions in the early secretory pathway and cycles between the ER, ER-Golgi intermediate compartment (ERGIC) and Golgi, mediating cargo transport through COPI and COPII-coated vesicles. In COPII vesicle-mediated anterograde transport, involved in the transport of GPI-anchored proteins by acting together with TMED2 as their cargo receptor; the function specifically implies SEC24C and SEC24D of the COPII vesicle coat and lipid raft-like microdomains of the ER. Recognizes GPI anchors structural remodeled in the ER by the GPI inositol-deacylase/PGAP1 and the metallophosphoesterase MPPE1/PGAP5. In COPI vesicle-mediated retrograde transport, involved in the biogenesis of COPI vesicles and vesicle coat recruitment. Involved in trafficking of amyloid beta A4 protein and soluble APP-beta release (independent from the modulation of gamma-secretase activity). Involved in the KDELR2-mediated retrograde transport of the toxin A subunit (CTX-A-K63)together with COPI and the COOH terminus of KDELR2. On Golgi membranes, acts as a primary receptor for ARF1-GDP, a GTP-binding protein involved in COPI-vesicle formation. Increases coatomer-dependent GTPase-activating activity of ARFGAP2 which mediates the hydrolysis of ARF1-bound GTP and therefore modulates protein trafficking from the Golgi apparatus. Involved in the exocytic trafficking of G protein-coupled receptors F2LR1/PAR2 (trypsin and tryspin-like enzyme receptor), OPRM1 (opioid receptor) and P2RY4 (UTD and UDP receptor) from the Golgi to the plasma membrane, thus contributing to receptor resensitization. In addition to its cargo receptor activity, may also act as a protein channel after oligomerization, facilitating the post-translational entry of leaderless cytoplasmic cargo into the ERGIC. Involved in the translocation into ERGIC, the vesicle entry and the secretion of leaderless cargos (lacking the secretion signal sequence), including the mature form of interleukin 1/IL-1 family members, the alpha-crystallin B chain HSPB5, the carbohydrate-binding proteins galectin-1/LGALS1 and galectin-3/LGALS3, the microtubule-associated protein Tau/MAPT, and the annexin A1/ANXA1; the translocation process is dependent on cargo protein unfolding and enhanced by chaperones HSP90AB1 and HSP90B1/GRP9. Could also associates with the presenilin-dependent gamma-secretase complex in order to regulate gamma-cleavages of the amyloid beta A4 protein to yield amyloid-beta 40/Abeta40. This Homo sapiens (Human) protein is Transmembrane emp24 domain-containing protein 10.